A 167-amino-acid polypeptide reads, in one-letter code: Ubiquitin-fold modifier-conjugating enzyme 1 (167 aa).

The active-site Glycyl thioester intermediate is the Cys116. Lys122 participates in a covalent cross-link: Glycyl lysine isopeptide (Lys-Gly) (interchain with G-Cter in UFM1).

It belongs to the ubiquitin-conjugating enzyme family. UFC1 subfamily. As to quaternary structure, interacts with UBA5 (via C-terminus). Interacts with UFL1. Interacts with UFM1. Interacts with KIRREL3. Ufmylated at Lys-122. Deufmylated by UFSP1.

In terms of biological role, E2-like enzyme which specifically catalyzes the second step in ufmylation. Accepts the ubiquitin-like modifier UFM1 from the E1 enzyme UBA5 and forms an intermediate with UFM1 via a thioester linkage. Ufmylation is involved in various processes, such as ribosome recycling, response to DNA damage, interferon response or reticulophagy (also called ER-phagy). The sequence is that of Ubiquitin-fold modifier-conjugating enzyme 1 from Rattus norvegicus (Rat).